Consider the following 126-residue polypeptide: Large ribosomal subunit protein bL17 (126 aa).

The protein belongs to the bacterial ribosomal protein bL17 family. Part of the 50S ribosomal subunit. Contacts protein L32.

The chain is Large ribosomal subunit protein bL17 from Rickettsia felis (strain ATCC VR-1525 / URRWXCal2) (Rickettsia azadi).